The sequence spans 465 residues: UDP-N-acetylmuramate--L-alanine ligase (465 aa).

Residue 112 to 118 coordinates ATP; the sequence is GTHGKTT.

It belongs to the MurCDEF family.

It localises to the cytoplasm. It catalyses the reaction UDP-N-acetyl-alpha-D-muramate + L-alanine + ATP = UDP-N-acetyl-alpha-D-muramoyl-L-alanine + ADP + phosphate + H(+). It functions in the pathway cell wall biogenesis; peptidoglycan biosynthesis. Its function is as follows. Cell wall formation. This chain is UDP-N-acetylmuramate--L-alanine ligase, found in Burkholderia ambifaria (strain ATCC BAA-244 / DSM 16087 / CCUG 44356 / LMG 19182 / AMMD) (Burkholderia cepacia (strain AMMD)).